We begin with the raw amino-acid sequence, 159 residues long: Immunogenic protein MPB63 (159 aa).

The N-terminal stretch at 1-29 (MKLTTMIKTAVAVVAMAAIATFAAPVALA) is a signal peptide.

It localises to the secreted. This chain is Immunogenic protein MPB63 (mpb63), found in Mycobacterium bovis (strain ATCC BAA-935 / AF2122/97).